A 190-amino-acid polypeptide reads, in one-letter code: Protein GrpE (190 aa).

Positions Met-1–Thr-33 are disordered. Low complexity predominate over residues Ala-11–Pro-32.

This sequence belongs to the GrpE family. Homodimer.

The protein resides in the cytoplasm. Functionally, participates actively in the response to hyperosmotic and heat shock by preventing the aggregation of stress-denatured proteins, in association with DnaK and GrpE. It is the nucleotide exchange factor for DnaK and may function as a thermosensor. Unfolded proteins bind initially to DnaJ; upon interaction with the DnaJ-bound protein, DnaK hydrolyzes its bound ATP, resulting in the formation of a stable complex. GrpE releases ADP from DnaK; ATP binding to DnaK triggers the release of the substrate protein, thus completing the reaction cycle. Several rounds of ATP-dependent interactions between DnaJ, DnaK and GrpE are required for fully efficient folding. The polypeptide is Protein GrpE (Alcanivorax borkumensis (strain ATCC 700651 / DSM 11573 / NCIMB 13689 / SK2)).